The sequence spans 160 residues: MEKPTSSTNGEKRKSPCDSNNRNDEMQETPNRDLALEPSLKKMKTSEYSTVLVLCYRKTKKIHSNQLENDQSQENSVNPVQEEEDEGSSQEDEDLDSSAESSKQDEDLQLPEGSFQEDKDLGLSEGSSQEDEDLDSSERSSQEEKDPDASEGSSEEGEED.

2 disordered regions span residues 1-48 and 64-160; these read MEKP…TSEY and SNQL…GEED. Residues 10 to 35 show a composition bias toward basic and acidic residues; the sequence is GEKRKSPCDSNNRNDEMQETPNRDLA. Residues 64 to 79 are compositionally biased toward polar residues; that stretch reads SNQLENDQSQENSVNP. A compositionally biased stretch (acidic residues) spans 81-97; that stretch reads QEEEDEGSSQEDEDLDS. A compositionally biased stretch (basic and acidic residues) spans 136 to 148; that stretch reads SSERSSQEEKDPD.

The protein belongs to the SPAN-X family.

In Pongo pygmaeus (Bornean orangutan), this protein is Sperm protein associated with the nucleus on the X chromosome N2 (SPANXN2).